Here is a 590-residue protein sequence, read N- to C-terminus: Arginine--tRNA ligase (590 aa).

The 'HIGH' region signature appears at 126 to 136; that stretch reads PNVAKEMHVGH.

It belongs to the class-I aminoacyl-tRNA synthetase family. In terms of assembly, monomer.

Its subcellular location is the cytoplasm. It carries out the reaction tRNA(Arg) + L-arginine + ATP = L-arginyl-tRNA(Arg) + AMP + diphosphate. The protein is Arginine--tRNA ligase of Streptomyces avermitilis (strain ATCC 31267 / DSM 46492 / JCM 5070 / NBRC 14893 / NCIMB 12804 / NRRL 8165 / MA-4680).